The primary structure comprises 1182 residues: DNA-directed RNA polymerase subunit beta' (1182 aa).

4 residues coordinate Zn(2+): Cys59, Cys61, Cys74, and Cys77. Mg(2+) is bound by residues Asp449, Asp451, and Asp453. 4 residues coordinate Zn(2+): Cys794, Cys868, Cys875, and Cys878.

It belongs to the RNA polymerase beta' chain family. The RNAP catalytic core consists of 2 alpha, 1 beta, 1 beta' and 1 omega subunit. When a sigma factor is associated with the core the holoenzyme is formed, which can initiate transcription. Mg(2+) is required as a cofactor. Requires Zn(2+) as cofactor.

It catalyses the reaction RNA(n) + a ribonucleoside 5'-triphosphate = RNA(n+1) + diphosphate. Its function is as follows. DNA-dependent RNA polymerase catalyzes the transcription of DNA into RNA using the four ribonucleoside triphosphates as substrates. In Clostridium acetobutylicum (strain ATCC 824 / DSM 792 / JCM 1419 / IAM 19013 / LMG 5710 / NBRC 13948 / NRRL B-527 / VKM B-1787 / 2291 / W), this protein is DNA-directed RNA polymerase subunit beta'.